Consider the following 145-residue polypeptide: D-aminoacyl-tRNA deacylase (145 aa).

The Gly-cisPro motif, important for rejection of L-amino acids motif lies at 133-134; that stretch reads GP.

This sequence belongs to the DTD family. Homodimer.

The protein localises to the cytoplasm. It catalyses the reaction glycyl-tRNA(Ala) + H2O = tRNA(Ala) + glycine + H(+). The enzyme catalyses a D-aminoacyl-tRNA + H2O = a tRNA + a D-alpha-amino acid + H(+). An aminoacyl-tRNA editing enzyme that deacylates mischarged D-aminoacyl-tRNAs. Also deacylates mischarged glycyl-tRNA(Ala), protecting cells against glycine mischarging by AlaRS. Acts via tRNA-based rather than protein-based catalysis; rejects L-amino acids rather than detecting D-amino acids in the active site. By recycling D-aminoacyl-tRNA to D-amino acids and free tRNA molecules, this enzyme counteracts the toxicity associated with the formation of D-aminoacyl-tRNA entities in vivo and helps enforce protein L-homochirality. The protein is D-aminoacyl-tRNA deacylase of Cutibacterium acnes (strain DSM 16379 / KPA171202) (Propionibacterium acnes).